The following is a 1132-amino-acid chain: DNA topoisomerase 2 (1132 aa).

Residues N68, N100, 137–139, and 150–157 contribute to the ATP site; these read SSN and GKNGLGVK. The interval 327–329 is interaction with DNA; it reads NKP. 363–365 contributes to the ATP binding site; the sequence is QNK. Residues 442–577 form the Toprim domain; sequence CTLIVCEGLS…NLKDFPFISS (136 aa). Residues E448, D538, and D540 each contribute to the Mg(2+) site. Residues 713–1125 enclose the Topo IIA-type catalytic domain; it reads LPHLIDGLKE…NEGQMWLKDI (413 aa). Y803 acts as the O-(5'-phospho-DNA)-tyrosine intermediate in catalysis. The interaction with DNA stretch occupies residues 979–988; it reads KLRSYIHTSN.

It belongs to the type II topoisomerase family. The cofactor is Mg(2+). Mn(2+) is required as a cofactor. Requires Ca(2+) as cofactor.

It catalyses the reaction ATP-dependent breakage, passage and rejoining of double-stranded DNA.. Can introduce negative superhelical turns into double-stranded circular DNA. The protein is DNA topoisomerase 2 (TOP2) of Acheta domesticus (House cricket).